The sequence spans 300 residues: Probable protein phosphatase 2C 2 (300 aa).

Residues 23 to 298 (IFAASEMQGW…DNMTTILVYL (276 aa)) enclose the PPM-type phosphatase domain. Residues Asp57, Gly58, Asp237, and Asp289 each contribute to the Mn(2+) site.

It belongs to the PP2C family. Mg(2+) is required as a cofactor. Requires Mn(2+) as cofactor.

Its subcellular location is the membrane. The catalysed reaction is O-phospho-L-seryl-[protein] + H2O = L-seryl-[protein] + phosphate. The enzyme catalyses O-phospho-L-threonyl-[protein] + H2O = L-threonyl-[protein] + phosphate. In terms of biological role, enzyme with a broad specificity. The sequence is that of Probable protein phosphatase 2C 2 from Paramecium tetraurelia.